Reading from the N-terminus, the 564-residue chain is Ribonuclease J (564 aa).

Zn(2+) is bound by residues H85, H87, D89, H90, H153, and D175. 375–379 provides a ligand contact to substrate; sequence HVSGH. H401 lines the Zn(2+) pocket.

This sequence belongs to the metallo-beta-lactamase superfamily. RNA-metabolizing metallo-beta-lactamase-like family. Bacterial RNase J subfamily. As to quaternary structure, homodimer, may be a subunit of the RNA degradosome. It depends on Zn(2+) as a cofactor.

Its subcellular location is the cytoplasm. Its function is as follows. An RNase that has 5'-3' exonuclease and possibly endonuclease activity. Plays a role in 16S and 23S rRNA processing. Might have a role in mRNA maturation and/or decay. This chain is Ribonuclease J, found in Sinorhizobium meliloti (strain Sm2011 / Rm2011 / 2011).